A 147-amino-acid chain; its full sequence is Large-conductance mechanosensitive channel (147 aa).

2 helical membrane-spanning segments follow: residues 14-34 and 85-105; these read VVDM…VKSL and FGLF…LFMI.

Belongs to the MscL family. As to quaternary structure, homopentamer.

The protein resides in the cell inner membrane. Its function is as follows. Channel that opens in response to stretch forces in the membrane lipid bilayer. May participate in the regulation of osmotic pressure changes within the cell. This is Large-conductance mechanosensitive channel from Tolumonas auensis (strain DSM 9187 / NBRC 110442 / TA 4).